A 391-amino-acid polypeptide reads, in one-letter code: tRNA-specific 2-thiouridylase MnmA (391 aa).

ATP contacts are provided by residues 35-42 (GLSGGVDS) and leucine 61. Cysteine 122 functions as the Nucleophile in the catalytic mechanism. Residues cysteine 122 and cysteine 221 are joined by a disulfide bond. Residue glycine 147 participates in ATP binding. The interaction with tRNA stretch occupies residues 171 to 173 (KDQ). Cysteine 221 acts as the Cysteine persulfide intermediate in catalysis. The tract at residues 328-329 (RY) is interaction with tRNA.

Belongs to the MnmA/TRMU family.

It localises to the cytoplasm. The catalysed reaction is S-sulfanyl-L-cysteinyl-[protein] + uridine(34) in tRNA + AH2 + ATP = 2-thiouridine(34) in tRNA + L-cysteinyl-[protein] + A + AMP + diphosphate + H(+). Catalyzes the 2-thiolation of uridine at the wobble position (U34) of tRNA, leading to the formation of s(2)U34. The protein is tRNA-specific 2-thiouridylase MnmA of Synechococcus sp. (strain CC9311).